The chain runs to 318 residues: MSPVLSESQLRDFKHTLESSKIPFRSEVRLGILSSFKIGGVCPVIVEPEISSQVSEILHIFSKFDIPWKILGGGSNLLISDHPDNFVTLRLSGKFKEFVSLGDGKFKIGAATNTTPTFRQISQLGYTGAEFLSTIPGWTGGAVIQNAGCYGGELFDLIESVEFLRNGEVFVRKPSEIKYGYRFTEFLNQKDSIILGIEILLKEGNLEEIESSLKDKRDRRNSSQPENKKSAGSVFKNPKVFREDGKEIKAWELLDQAGLRGQIKGGAQISPEHCNFIVNLGTATASDVHYLIDLVVDRVYQTSGILLNREIEFFGDIP.

The region spanning 38–204 is the FAD-binding PCMH-type domain; the sequence is IGGVCPVIVE…LGIEILLKEG (167 aa). Arg182 is a catalytic residue. The segment covering 212 to 229 has biased composition (basic and acidic residues); sequence SLKDKRDRRNSSQPENKK. The interval 212–232 is disordered; sequence SLKDKRDRRNSSQPENKKSAG. Ser233 (proton donor) is an active-site residue. Glu310 is an active-site residue.

This sequence belongs to the MurB family. FAD serves as cofactor.

Its subcellular location is the cytoplasm. It carries out the reaction UDP-N-acetyl-alpha-D-muramate + NADP(+) = UDP-N-acetyl-3-O-(1-carboxyvinyl)-alpha-D-glucosamine + NADPH + H(+). Its pathway is cell wall biogenesis; peptidoglycan biosynthesis. In terms of biological role, cell wall formation. The polypeptide is UDP-N-acetylenolpyruvoylglucosamine reductase (Leptospira interrogans serogroup Icterohaemorrhagiae serovar copenhageni (strain Fiocruz L1-130)).